A 203-amino-acid polypeptide reads, in one-letter code: MKLLHVDGSILGPHSVSRTVSAAIVDRLRAQHPDLDVAYRDLAQTPLPHLSGAVLAGAQPNATNAPDVQHDVDLGRQALDEFLAADVVVIGAPLYNFTLSSQLKAWIDRILVAGVTFRYGPSGAEGLAGGKRVIAVVSRGGLYGPGTPAAAAEHAETYLRTVLAFIGITAPEIIVAEGIALGPEARERALAGALDAAAALKAA.

FMN contacts are provided by residues Ser-9, 15–17 (SVS), and 138–141 (SRGG).

It belongs to the azoreductase type 1 family. Homodimer. FMN is required as a cofactor.

It catalyses the reaction 2 a quinone + NADH + H(+) = 2 a 1,4-benzosemiquinone + NAD(+). The catalysed reaction is N,N-dimethyl-1,4-phenylenediamine + anthranilate + 2 NAD(+) = 2-(4-dimethylaminophenyl)diazenylbenzoate + 2 NADH + 2 H(+). Quinone reductase that provides resistance to thiol-specific stress caused by electrophilic quinones. In terms of biological role, also exhibits azoreductase activity. Catalyzes the reductive cleavage of the azo bond in aromatic azo compounds to the corresponding amines. In Methylorubrum populi (strain ATCC BAA-705 / NCIMB 13946 / BJ001) (Methylobacterium populi), this protein is FMN-dependent NADH:quinone oxidoreductase.